A 1127-amino-acid polypeptide reads, in one-letter code: Carbamoyl phosphate synthase large chain (1127 aa).

Residues 1-402 (MPKRTDIKSV…SLGKAMRSID (402 aa)) form a carboxyphosphate synthetic domain region. Positions 129, 169, 175, 176, 208, 210, 215, 241, 242, 243, 285, and 299 each coordinate ATP. The ATP-grasp 1 domain maps to 133–328 (KKVVDEAGAE…IAKIATKLAL (196 aa)). The Mg(2+) site is built by Gln-285, Glu-299, and Asn-301. Residues Gln-285, Glu-299, and Asn-301 each contribute to the Mn(2+) site. The interval 403 to 551 (KRHMGFNWDG…YYYSCYADET (149 aa)) is oligomerization domain. The segment at 552–962 (ELRPREREAV…AFAKSQLAAY (411 aa)) is carbamoyl phosphate synthetic domain. One can recognise an ATP-grasp 2 domain in the interval 681-881 (GEVLKKAEMN…LAKAAARIMA (201 aa)). ATP-binding residues include Arg-717, Lys-765, Leu-767, Glu-772, Gly-797, Val-798, His-799, Ser-800, Gln-840, and Glu-852. Gln-840, Glu-852, and Asn-854 together coordinate Mg(2+). Mn(2+) contacts are provided by Gln-840, Glu-852, and Asn-854. The tract at residues 963–1127 (DGGLPTHGNV…QLFELERREF (165 aa)) is allosteric domain. An MGS-like domain is found at 964–1127 (GGLPTHGNVF…QLFELERREF (164 aa)).

It belongs to the CarB family. Composed of two chains; the small (or glutamine) chain promotes the hydrolysis of glutamine to ammonia, which is used by the large (or ammonia) chain to synthesize carbamoyl phosphate. Tetramer of heterodimers (alpha,beta)4. It depends on Mg(2+) as a cofactor. Mn(2+) serves as cofactor.

The enzyme catalyses hydrogencarbonate + L-glutamine + 2 ATP + H2O = carbamoyl phosphate + L-glutamate + 2 ADP + phosphate + 2 H(+). It carries out the reaction hydrogencarbonate + NH4(+) + 2 ATP = carbamoyl phosphate + 2 ADP + phosphate + 2 H(+). The protein operates within amino-acid biosynthesis; L-arginine biosynthesis; carbamoyl phosphate from bicarbonate: step 1/1. Its pathway is pyrimidine metabolism; UMP biosynthesis via de novo pathway; (S)-dihydroorotate from bicarbonate: step 1/3. Large subunit of the glutamine-dependent carbamoyl phosphate synthetase (CPSase). CPSase catalyzes the formation of carbamoyl phosphate from the ammonia moiety of glutamine, carbonate, and phosphate donated by ATP, constituting the first step of 2 biosynthetic pathways, one leading to arginine and/or urea and the other to pyrimidine nucleotides. The large subunit (synthetase) binds the substrates ammonia (free or transferred from glutamine from the small subunit), hydrogencarbonate and ATP and carries out an ATP-coupled ligase reaction, activating hydrogencarbonate by forming carboxy phosphate which reacts with ammonia to form carbamoyl phosphate. In Bifidobacterium longum (strain DJO10A), this protein is Carbamoyl phosphate synthase large chain.